Here is a 938-residue protein sequence, read N- to C-terminus: Glutamate receptor ionotropic, NMDA 1 (938 aa).

An N-terminal signal peptide occupies residues 1-18 (MSTMHLLTFALLFSCSFA). Residues 19 to 559 (RAACDPKIVN…TLDSFMQPFQ (541 aa)) are Extracellular-facing. N61, N203, N239, N276, N300, N350, N368, N440, N471, and N491 each carry an N-linked (GlcNAc...) asparagine glycan. An intrachain disulfide couples C79 to C308. 2 disulfides stabilise this stretch: C420–C454 and C436–C455. Positions 516, 518, and 523 each coordinate glycine. Residues 560 to 580 (STLWLLVGLSVHVVAVMLYLL) traverse the membrane as a helical segment. Residues 581 to 602 (DRFSPFGRFKVNSEEEEEDALT) lie on the Cytoplasmic side of the membrane. Positions 603–624 (LSSAMWFSWGVLLNSGIGEGAP) form an intramembrane region, discontinuously helical. The segment at 603 to 624 (LSSAMWFSWGVLLNSGIGEGAP) is pore-forming. Residues 625–630 (RSFSAR) are Cytoplasmic-facing. A helical membrane pass occupies residues 631-647 (ILGMVWAGFAMIIVASY). Residues 648–812 (TANLAAFLVL…NAPATLTFEN (165 aa)) lie on the Extracellular side of the membrane. N-linked (GlcNAc...) asparagine glycosylation occurs at N674. Glycine contacts are provided by S688 and D732. A disulfide bridge connects residues C744 and C798. N771 carries an N-linked (GlcNAc...) asparagine glycan. The helical transmembrane segment at 813–833 (MAGVFMLVAGGIVAGIFLIFI) threads the bilayer. Residues 834–938 (EIAYKRHKDA…LQLCSRHRES (105 aa)) lie on the Cytoplasmic side of the membrane. At S889 the chain carries Phosphoserine; by PKC. The segment at 889–938 (SSFKRRRSSKDTSTGGGRGALQNQKDTVLPRRAIEREEGQLQLCSRHRES) is disordered. At S890 the chain carries Phosphoserine. Residues S896 and S897 each carry the phosphoserine; by PKC modification. Over residues 916-927 (VLPRRAIEREEG) the composition is skewed to basic and acidic residues.

Belongs to the glutamate-gated ion channel (TC 1.A.10.1) family. NR1/GRIN1 subfamily. Heterotetramer; the NMDAR subunits are modular and harbor tiered domains that function in concert to regulate opening and closing of the cation-selective ion channel pore. Forms heterotetrameric channels composed of two GluN1/zeta subunits (GRIN1), and two identical GluN2/epsilon subunits (GRIN2A, GRIN2B, GRIN2C or GRIN2D) or GluN3 subunits (GRIN3A or GRIN3B) (in vitro). Can also form heterotetrameric channels that contain at least two GluN1 subunits and at least two different GluN2 subunits (or a combination of one GluN2 and one GluN3 subunits) (in vitro). In vivo, the subunit composition may vary in function of the expression levels of the different subunits. Found in a complex with GRIN2A or GRIN2B, GRIN3A and PPP2CB. Found in a complex with GRIN2A or GRIN2B and GRIN3B. Interacts with SNX27 (via PDZ domain); the interaction is required for recycling to the plasma membrane when endocytosed and prevent degradation in lysosomes. Interacts with DLG4 and MPDZ. Interacts with LRFN1 and LRFN2. Interacts with MYZAP. Found in a complex with DLG4 and PRR7. Found in a complex with GRIN2B and PRR7. Interacts with PRR7; the interaction is reduced following NMDA receptor activity. Post-translationally, NMDA is probably regulated by C-terminal phosphorylation of an isoform of GRIN1 by PKC. Dephosphorylated on Ser-897 probably by protein phosphatase 2A (PPP2CB). Its phosphorylated state is influenced by the formation of the NMDAR-PPP2CB complex and the NMDAR channel activity. In terms of tissue distribution, detected in brain (at protein level). Detected in brain.

It localises to the cell membrane. The protein localises to the postsynaptic cell membrane. Its subcellular location is the postsynaptic density membrane. The protein resides in the synaptic cell membrane. The enzyme catalyses Ca(2+)(in) = Ca(2+)(out). It carries out the reaction Na(+)(in) = Na(+)(out). The catalysed reaction is K(+)(in) = K(+)(out). Functionally, component of N-methyl-D-aspartate (NMDA) receptors (NMDARs) that function as heterotetrameric, ligand-gated cation channels with high calcium permeability and voltage-dependent block by Mg(2+). NMDARs participate in synaptic plasticity for learning and memory formation by contributing to the long-term potentiation (LTP). Channel activation requires binding of the neurotransmitter L-glutamate to the GluN2 subunit, glycine or D-serine binding to the GluN1 subunit, plus membrane depolarization to eliminate channel inhibition by Mg(2+). NMDARs mediate simultaneously the potasium efflux and the influx of calcium and sodium. Each GluN2 or GluN3 subunit confers differential attributes to channel properties, including activation, deactivation and desensitization kinetics, pH sensitivity, Ca2(+) permeability, and binding to allosteric modulators. The protein is Glutamate receptor ionotropic, NMDA 1 of Mus musculus (Mouse).